Consider the following 1026-residue polypeptide: Multidrug resistance protein MdtC (1026 aa).

Transmembrane regions (helical) follow at residues 16–36 (LLAL…PVAP), 333–353 (EVEQ…FLFL), 360–380 (LIPA…IYLC), 387–407 (LSLM…IVVL), 435–455 (VFSI…MGGI), 459–479 (LFHE…LIAL), 528–548 (WVLL…ISIP), 853–873 (LLLI…LYES), 897–917 (LFNA…IGLV), 953–973 (PILM…FSYG), and 984–1004 (ITIV…TPVV).

It belongs to the resistance-nodulation-cell division (RND) (TC 2.A.6) family. MdtC subfamily. In terms of assembly, part of a tripartite efflux system composed of MdtA, MdtB and MdtC. MdtC forms a heteromultimer with MdtB.

Its subcellular location is the cell inner membrane. The chain is Multidrug resistance protein MdtC from Edwardsiella ictaluri (strain 93-146).